The chain runs to 186 residues: Mitoferrin-2A (186 aa).

A Solcar repeat occupies 75–163; it reads SNVTTHMLAG…FACYEKLKKT (89 aa). A run of 3 helical transmembrane segments spans residues 77–96, 137–157, and 172–185; these read VTTHMLAGAVAGVMEHCLMY, RGLNVTATGAGPAHALYFACY, and GNSHIANGTDYSCP.

The protein belongs to the mitochondrial carrier (TC 2.A.29) family.

It is found in the mitochondrion inner membrane. The catalysed reaction is Fe(2+)(in) = Fe(2+)(out). Functionally, mitochondrial iron transporter that mediates iron uptake. Probably required for heme synthesis of hemoproteins and Fe-S cluster assembly in non-erythroid cells. The chain is Mitoferrin-2A (slc25a28-a) from Xenopus laevis (African clawed frog).